The primary structure comprises 95 residues: DNA-directed RNA polymerase subunit Rpo11 (95 aa).

The protein belongs to the archaeal Rpo11/eukaryotic RPB11/RPC19 RNA polymerase subunit family. As to quaternary structure, part of the RNA polymerase complex.

The protein localises to the cytoplasm. It carries out the reaction RNA(n) + a ribonucleoside 5'-triphosphate = RNA(n+1) + diphosphate. Its function is as follows. DNA-dependent RNA polymerase (RNAP) catalyzes the transcription of DNA into RNA using the four ribonucleoside triphosphates as substrates. The sequence is that of DNA-directed RNA polymerase subunit Rpo11 from Pyrococcus horikoshii (strain ATCC 700860 / DSM 12428 / JCM 9974 / NBRC 100139 / OT-3).